Here is a 267-residue protein sequence, read N- to C-terminus: Indole-3-glycerol phosphate synthase (267 aa).

Belongs to the TrpC family.

It carries out the reaction 1-(2-carboxyphenylamino)-1-deoxy-D-ribulose 5-phosphate + H(+) = (1S,2R)-1-C-(indol-3-yl)glycerol 3-phosphate + CO2 + H2O. It participates in amino-acid biosynthesis; L-tryptophan biosynthesis; L-tryptophan from chorismate: step 4/5. The chain is Indole-3-glycerol phosphate synthase from Polynucleobacter necessarius subsp. necessarius (strain STIR1).